A 295-amino-acid chain; its full sequence is Protoheme IX farnesyltransferase (295 aa).

A run of 9 helical transmembrane segments spans residues 9 to 29 (ITKP…FFLA), 36 to 56 (FGVF…GCVF), 80 to 100 (LVSL…GVAL), 108 to 128 (LAAL…SLYL), 135 to 155 (GTLV…CAVS), 163 to 183 (LTLL…IAIF), 209 to 229 (ILLY…GGYA), 230 to 250 (GLNY…MAWK), and 265 to 285 (FVFS…DFQV).

It belongs to the UbiA prenyltransferase family. Protoheme IX farnesyltransferase subfamily.

The protein localises to the cell inner membrane. It catalyses the reaction heme b + (2E,6E)-farnesyl diphosphate + H2O = Fe(II)-heme o + diphosphate. It functions in the pathway porphyrin-containing compound metabolism; heme O biosynthesis; heme O from protoheme: step 1/1. In terms of biological role, converts heme B (protoheme IX) to heme O by substitution of the vinyl group on carbon 2 of heme B porphyrin ring with a hydroxyethyl farnesyl side group. This Pseudomonas syringae pv. tomato (strain ATCC BAA-871 / DC3000) protein is Protoheme IX farnesyltransferase.